A 452-amino-acid chain; its full sequence is Lamina-associated polypeptide 2, isoforms beta/delta/epsilon/gamma (452 aa).

Residues 1 to 409 are nucleoplasmic; that stretch reads MPEFLEDPSV…KSEKTKKRRS (409 aa). Residues 5 to 48 form the LEM-like domain; it reads LEDPSVLTKDKLKSELVANNVTLPAGEQRKDVYVQLYLQHLTAR. 2 disordered regions span residues 48 to 111 and 149 to 263; these read RNRP…DLDV and REQG…RVET. Positions 49 to 108 are linker; sequence NRPPLAAGANSKGPPDFSSDEEREPTPVLGSGASVGRGRGAVGRKATKKTDKPRLEDKDD. Residues Ser59, Ser66, and Ser67 each carry the phosphoserine modification. Thr74 carries the phosphothreonine modification. Phosphoserine is present on residues Ser79 and Ser82. Arg85 and Arg87 each carry omega-N-methylarginine. Residues 96 to 105 show a composition bias toward basic and acidic residues; the sequence is KKTDKPRLED. In terms of domain architecture, LEM spans 109 to 153; the sequence is LDVTELSNEELLDQLVRYGVNPGPIVGTTRKLYEKKLLKLREQGT. The NAKAP95-binding N stretch occupies residues 137–242; the sequence is TRKLYEKKLL…TSGSSTGGPL (106 aa). Thr153 is subject to Phosphothreonine. Residues 154–177 are compositionally biased toward polar residues; the sequence is ESRSSTPLPTVSSSAENTRQNGSN. Ser155 and Ser158 each carry phosphoserine. Phosphothreonine is present on residues Thr159 and Thr163. A phosphoserine mark is found at Ser165, Ser167, and Ser176. Positions 178-202 are enriched in basic and acidic residues; the sequence is DSDRYSDNDEDSKIELKLEKREPLK. Ser179 carries the post-translational modification Phosphoserine; by PKC. A phosphoserine mark is found at Ser183 and Ser189. An N6-acetyllysine modification is found at Lys206. The residue at position 210 (Thr210) is a Phosphothreonine. Phosphoserine occurs at positions 221 and 223. A compositionally biased stretch (low complexity) spans 226–240; sequence GVTETEWTSGSSTGG. Ser249, Ser253, Ser264, Ser291, Ser305, and Ser306 each carry phosphoserine. Residues 298–370 form a binds lamins B region; the sequence is TGNFKHASSI…SCRRPIKGAA (73 aa). The tract at residues 299–373 is NAKAP95-binding C; sequence GNFKHASSIL…RPIKGAAGRP (75 aa). Thr311 carries the post-translational modification Phosphothreonine. Ser314 carries the post-translational modification Phosphoserine. At Arg319 the chain carries Citrulline. Ser361, Ser377, and Ser384 each carry phosphoserine. Lys388 carries the N6-acetyllysine modification. Lys400 participates in a covalent cross-link: Glycyl lysine isopeptide (Lys-Gly) (interchain with G-Cter in SUMO2). Residue Ser401 is modified to Phosphoserine. The helical; Signal-anchor for type II membrane protein transmembrane segment at 410 to 430 threads the bilayer; it reads VPMWIKMLLFALVAVFLFLVY. The Lumenal portion of the chain corresponds to 431–452; the sequence is QAMETNQGNPFTNFLQDTKISN.

The protein belongs to the LEM family. Interacts with LMNB1, LMNB2, BANF1, AKAP8L, GMCL and chromosomes. Post-translationally, mitosis-specific phosphorylation specifically abolishes its binding to lamin B and chromosomes. In terms of processing, citrullinated by PADI4.

The protein resides in the nucleus inner membrane. The protein localises to the chromosome. Its function is as follows. May help direct the assembly of the nuclear lamina and thereby help maintain the structural organization of the nuclear envelope. Possible receptor for attachment of lamin filaments to the inner nuclear membrane. May be involved in the control of initiation of DNA replication through its interaction with NAKAP95. This Mus musculus (Mouse) protein is Lamina-associated polypeptide 2, isoforms beta/delta/epsilon/gamma (Tmpo).